The chain runs to 318 residues: Acetyl-coenzyme A carboxylase carboxyl transferase subunit alpha (318 aa).

The region spanning 32–293 is the CoA carboxyltransferase C-terminal domain; sequence NINEEIQRLE…REALREEWAR (262 aa).

Belongs to the AccA family. In terms of assembly, acetyl-CoA carboxylase is a heterohexamer composed of biotin carboxyl carrier protein (AccB), biotin carboxylase (AccC) and two subunits each of ACCase subunit alpha (AccA) and ACCase subunit beta (AccD).

It is found in the cytoplasm. The enzyme catalyses N(6)-carboxybiotinyl-L-lysyl-[protein] + acetyl-CoA = N(6)-biotinyl-L-lysyl-[protein] + malonyl-CoA. Its pathway is lipid metabolism; malonyl-CoA biosynthesis; malonyl-CoA from acetyl-CoA: step 1/1. Component of the acetyl coenzyme A carboxylase (ACC) complex. First, biotin carboxylase catalyzes the carboxylation of biotin on its carrier protein (BCCP) and then the CO(2) group is transferred by the carboxyltransferase to acetyl-CoA to form malonyl-CoA. This Halorhodospira halophila (strain DSM 244 / SL1) (Ectothiorhodospira halophila (strain DSM 244 / SL1)) protein is Acetyl-coenzyme A carboxylase carboxyl transferase subunit alpha.